Reading from the N-terminus, the 531-residue chain is Splicing factor ESS-2 (531 aa).

Disordered regions lie at residues Arg104 to Lys163 and Pro453 to Phe531. The segment covering Thr105–Glu114 has biased composition (polar residues). 2 stretches are compositionally biased toward low complexity: residues Thr125 to Ala136 and Ser464 to Ser477. Residues Ser480–Gly498 show a composition bias toward polar residues.

The protein belongs to the ESS2 family.

The protein localises to the nucleus. In terms of biological role, regulates pre-mRNA splicing. The protein is Splicing factor ESS-2 (ess-2) of Caenorhabditis elegans.